The primary structure comprises 484 residues: Xylulose kinase (484 aa).

Methionine 77 to histidine 78 contributes to the substrate binding site. Aspartate 233 (proton acceptor) is an active-site residue.

It belongs to the FGGY kinase family. Homodimer.

It catalyses the reaction D-xylulose + ATP = D-xylulose 5-phosphate + ADP + H(+). The enzyme catalyses 1-deoxy-D-xylulose + ATP = 1-deoxy-D-xylulose 5-phosphate + ADP + H(+). With respect to regulation, sugar binding is accompanied by a dramatic hinge-bending movement that enhances interactions with Mg-ATP. Its function is as follows. Catalyzes the phosphorylation of D-xylulose to D-xylulose 5-phosphate. Also catalyzes the phosphorylation of 1-deoxy-D-xylulose to 1-deoxy-D-xylulose 5-phosphate, with lower efficiency. Can also use D-ribulose, xylitol and D-arabitol, but D-xylulose is preferred over the other substrates. Has a weak substrate-independent Mg-ATP-hydrolyzing activity. The protein is Xylulose kinase of Escherichia coli (strain K12).